The following is a 198-amino-acid chain: MTEDWVPKTKLGRLVADGKIKTMDEALASNLPLKEPEIVDILLPDLEDDVLEISMVQRMTDSGRRTKFRVTAVVGNRNGYVGIGTGKASQVAPAIQKAINNAKLNIFKVQRGCGSWECGCGGDHSLPFKVTGTSGSVRVTLIPGPKGLGIVAGDVAKRVIELAGVKDVWSFTKGQTKTTVNFAKATYEALKKTMYVKR.

Residues 46-109 (LEDDVLEISM…NNAKLNIFKV (64 aa)) form the S5 DRBM domain.

Belongs to the universal ribosomal protein uS5 family. Part of the 30S ribosomal subunit. Contacts protein S4.

Functionally, with S4 and S12 plays an important role in translational accuracy. In Archaeoglobus fulgidus (strain ATCC 49558 / DSM 4304 / JCM 9628 / NBRC 100126 / VC-16), this protein is Small ribosomal subunit protein uS5.